Here is a 721-residue protein sequence, read N- to C-terminus: Pre-mRNA-splicing ATP-dependent RNA helicase PRP28 (721 aa).

The tract at residues 12 to 134 (KKAADTAAAK…SAEDIEATLL (123 aa)) is disordered. Over residues 26–63 (PKAERERLAAEKAKKEEDDKKRKASEEEQKRKEEEQKW) the composition is skewed to basic and acidic residues. Residues 64–77 (RSNGSSRPNESNGS) are compositionally biased toward polar residues. Over residues 88–104 (NDGRDDRERDRDRDQGR) the composition is skewed to basic and acidic residues. Positions 288-316 (RSWQESNLPQRLLNIVDDVGYKDPSPIQR) match the Q motif motif. The region spanning 319-522 (IPIALQARDL…KKYLRRPAIV (204 aa)) is the Helicase ATP-binding domain. 332-339 (AVTGSGKT) lines the ATP pocket. A DEAD box motif is present at residues 445–448 (DEAD). Positions 533–696 (TVEQRVEFVS…KVPEELRRHE (164 aa)) constitute a Helicase C-terminal domain. The tract at residues 685-721 (ISKVPEELRRHEAAQSKPVRGAKKDKDEGSGKGNWQH) is disordered. A compositionally biased stretch (basic and acidic residues) spans 688 to 698 (VPEELRRHEAA).

This sequence belongs to the DEAD box helicase family. DDX23/PRP28 subfamily. As to quaternary structure, component of the U5 snRNP complex.

It localises to the cytoplasm. It is found in the nucleus. The enzyme catalyses ATP + H2O = ADP + phosphate + H(+). Its function is as follows. ATP-dependent RNA helicase involved in mRNA splicing. May destabilize the U1/5'-splice site duplex to permit an effective competition for the 5'-splice site by the U6 snRNA, resulting in the switch between U1 and U6 at the 5'-splice site. May also act to unwind the U4/U6 base-pairing interaction in the U4/U6/U5 snRNP, facilitating the first covalent step of splicing. The sequence is that of Pre-mRNA-splicing ATP-dependent RNA helicase PRP28 (PRP28) from Gibberella zeae (strain ATCC MYA-4620 / CBS 123657 / FGSC 9075 / NRRL 31084 / PH-1) (Wheat head blight fungus).